A 319-amino-acid chain; its full sequence is Protein sprouty homolog 1 (319 aa).

Methionine 1 carries the post-translational modification N-acetylmethionine. Residues 54–157 form a disordered region; it reads TEGPSVVKRP…HRSERAIRTQ (104 aa). Positions 69-79 are enriched in basic and acidic residues; sequence PRQEKHERTHE. Low complexity predominate over residues 112–131; the sequence is SRSTSTGSAASSGSNSSASS. Positions 183-295 constitute an SPR domain; the sequence is QCGKCKCGEC…CYDWIHRPGC (113 aa).

Belongs to the sprouty family. As to quaternary structure, forms heterodimers with SPRY2. Interacts with TESK1. Interacts with CAV1 (via C-terminus).

It localises to the cytoplasm. The protein resides in the membrane. In terms of biological role, inhibits fibroblast growth factor (FGF)-induced retinal lens fiber differentiation, probably by inhibiting FGF-mediated phosphorylation of ERK1/2. Inhibits TGFB-induced epithelial-to-mesenchymal transition in lens epithelial cells. This Bos taurus (Bovine) protein is Protein sprouty homolog 1 (SPRY1).